A 143-amino-acid chain; its full sequence is 3-hydroxyacyl-[acyl-carrier-protein] dehydratase FabZ (143 aa).

H48 is an active-site residue.

It belongs to the thioester dehydratase family. FabZ subfamily.

The protein localises to the cytoplasm. The catalysed reaction is a (3R)-hydroxyacyl-[ACP] = a (2E)-enoyl-[ACP] + H2O. Functionally, involved in unsaturated fatty acids biosynthesis. Catalyzes the dehydration of short chain beta-hydroxyacyl-ACPs and long chain saturated and unsaturated beta-hydroxyacyl-ACPs. The polypeptide is 3-hydroxyacyl-[acyl-carrier-protein] dehydratase FabZ (Roseiflexus castenholzii (strain DSM 13941 / HLO8)).